The chain runs to 388 residues: MKLHEYQAKQLFHRYGIPIPEGRLARSVEETGQAARAFAGRCVVKAQIHAGGRGKAGGVARVNSVDQARNIAQRLLQHTLVTAQTGDQGLYVGSLLVEEIVPVAREMYLSLTLDRANGRYCLIASPDGGVDIEQTARKTPERVRRLTIDPLVGLRAFHARDIARFLGLDGPLSAAASKVILSLYRCLLEKDASLVEINPLAVTEEGRLMAMDAKVSIDDSALFRQKEMLEWLDESQLAPLEVRAAHSDIAYIKMDGCIGCLVNGAGLAMATLDMLSECGGQPANFLDVGGGADQDKVVEAFRILLEDPAVEGVLVNIFGGIMRCDLIAQGLIAAAEQVGCQLPIVVRMAGARRDEGKHLLQQTQLNISWQDGLAAAATAIVRQLSPSA.

Positions 9–243 constitute an ATP-grasp domain; that stretch reads KQLFHRYGIP…ESQLAPLEVR (235 aa). ATP is bound by residues K45, 52–54, E98, V101, and E106; that span reads GRG. Mg(2+) is bound by residues N198 and D212. Substrate-binding positions include N263 and 320 to 322; that span reads GIM.

The protein belongs to the succinate/malate CoA ligase beta subunit family. Heterotetramer of two alpha and two beta subunits. The cofactor is Mg(2+).

It catalyses the reaction succinate + ATP + CoA = succinyl-CoA + ADP + phosphate. It carries out the reaction GTP + succinate + CoA = succinyl-CoA + GDP + phosphate. It participates in carbohydrate metabolism; tricarboxylic acid cycle; succinate from succinyl-CoA (ligase route): step 1/1. Functionally, succinyl-CoA synthetase functions in the citric acid cycle (TCA), coupling the hydrolysis of succinyl-CoA to the synthesis of either ATP or GTP and thus represents the only step of substrate-level phosphorylation in the TCA. The beta subunit provides nucleotide specificity of the enzyme and binds the substrate succinate, while the binding sites for coenzyme A and phosphate are found in the alpha subunit. The sequence is that of Succinate--CoA ligase [ADP-forming] subunit beta from Syntrophotalea carbinolica (strain DSM 2380 / NBRC 103641 / GraBd1) (Pelobacter carbinolicus).